The chain runs to 262 residues: MEDERSTQSYQGGEAAEQVEVTDRGLLGNLLGKKKAEEDKEKEEELVTGMEKVSVEEPEVKKEEHEDGEKKETLFSKLHRSSSSSSSSSDEEEEEVIDDNGEVIKRKKKKGLKEKLQGKLPGHKDTEGEHVTGLPAPAAPASVQTHGGHHDTDVVVEKIDGDVKTEAAPAVPEEEKKGFLEKIKEKLPGGHKKPEDAAAVPVTHAAPAPVHAPVPAPEEVSSPDAKEKKGLLGKIMDKLPGYHKTGEEDKAAAATGEHKPSA.

Disordered regions lie at residues 1-153 (MEDE…HDTD) and 187-262 (LPGG…KPSA). Basic and acidic residues-rich tracts occupy residues 34–45 (KKAEEDKEKEEE) and 53–74 (VSVE…KETL). A compositionally biased stretch (acidic residues) spans 89-101 (SDEEEEEVIDDNG). 2 tandem repeats follow at residues 106-126 (RKKK…HKDT) and 173-193 (EEEK…GHKK). The 3 X 21 AA repeats, Lys-rich stretch occupies residues 106 to 245 (RKKKKGLKEK…MDKLPGYHKT (140 aa)). 2 stretches are compositionally biased toward basic and acidic residues: residues 113–130 (KEKL…EGEH) and 187–196 (LPGGHKKPED). Residues 197-209 (AAAVPVTHAAPAP) are compositionally biased toward low complexity. Copy 3 of the repeat occupies 225–245 (AKEKKGLLGKIMDKLPGYHKT). The span at 244–262 (KTGEEDKAAAATGEHKPSA) shows a compositional bias: basic and acidic residues.

In terms of tissue distribution, expressed in roots, crown and leaves during cold acclimation.

The protein is Dehydrin COR410 (COR410) of Triticum aestivum (Wheat).